A 326-amino-acid chain; its full sequence is F-box/LRR-repeat protein 12 (326 aa).

In terms of domain architecture, F-box spans 1–47 (MATLVELPDSVLLEIFSYLPVRDRIRISRVCHRWKRLVDDRWLWRHV). LRR repeat units lie at residues 51 to 78 (LYTMRPKVMWHLLRRYMASRLHSLRMGG), 86 to 111 (APQLSPALLRALGQKCPNLKRLCLHV), 113 to 133 (DLSMVPITSLPSTLRTLELHS), 161 to 185 (VPAFRDEHLQGLTRFRALRSLVLGG), 186 to 211 (TYRVTETGLDAGLQELSYLQRLEVLG), 212 to 236 (CTLSADSTLLAISRHLRDVRKIRLT), 237 to 261 (VRGLSAPGLAVLEGMPALESLCLQG), and 266 to 291 (PEMPSPTEILSSCLTMPKLRVLELQG).

In terms of assembly, interacts with SKP1 and CUL1.

Its pathway is protein modification; protein ubiquitination. Its function is as follows. Substrate-recognition component of the SCF (SKP1-CUL1-F-box protein)-type E3 ubiquitin ligase complex. Mediates the polyubiquitination and proteasomal degradation of CAMK1 leading to disruption of cyclin D1/CDK4 complex assembly which results in G1 cell cycle arrest in lung epithelia. In Homo sapiens (Human), this protein is F-box/LRR-repeat protein 12 (FBXL12).